The chain runs to 220 residues: Redox-sensing transcriptional repressor Rex (220 aa).

The H-T-H motif DNA-binding region spans 16-55 (MYVQVLETLKREGSQVVSSELLARTCSVNPSQIRKDLAYF). Residue 90–95 (GIGNLG) coordinates NAD(+).

The protein belongs to the transcriptional regulatory Rex family. As to quaternary structure, homodimer.

It is found in the cytoplasm. In terms of biological role, modulates transcription in response to changes in cellular NADH/NAD(+) redox state. This Solidesulfovibrio magneticus (strain ATCC 700980 / DSM 13731 / RS-1) (Desulfovibrio magneticus) protein is Redox-sensing transcriptional repressor Rex.